A 585-amino-acid polypeptide reads, in one-letter code: Arginine--tRNA ligase (585 aa).

Residues 131–141 (ANPTGPMHVGH) carry the 'HIGH' region motif.

This sequence belongs to the class-I aminoacyl-tRNA synthetase family. As to quaternary structure, monomer.

The protein localises to the cytoplasm. The enzyme catalyses tRNA(Arg) + L-arginine + ATP = L-arginyl-tRNA(Arg) + AMP + diphosphate. The protein is Arginine--tRNA ligase of Brucella melitensis biotype 1 (strain ATCC 23456 / CCUG 17765 / NCTC 10094 / 16M).